A 566-amino-acid polypeptide reads, in one-letter code: MKQSMVFSPTLREVPADAEIKSHQLLLRAGFMRQNASGIYSFLPFGLKVLHKVERIVREEMERAGAVELLMPAMQAAELWQESGRWYSYGSELMRMKDRNAREFALGATHEEVITDLVRDEIKSYKKLPLTLYQIQTKFRDEQRPRFGLLRGREFLMKDAYSFHATQESLDEVYDRLYKAYSNIFARCGLNFRAVIADSGAMGGKDTHEFMVLSDVGEDTIAYSDTSDYAANIEMAPVVATYTKSDEAEMALEKVATPDQKAIEEVSAFLNIEADKCIKSMVFKVDEKLVVVLVRGDHEVNDVKVKNVYGASVVELASHEEVKELLNCEVGSLGPIGVTGDIEIIADHAVASIVNGCSGANEEGFHYVNVNPERDFKVSQYTDLRFIQEGDQSPDGNGTILFARGIEVGHVFKLGTRYSEAMNATFLDENGKTQPLIMGCYGIGVSRTVAAIAEQFNDENGLVWPKAVAPFHVHVIPVNMKSDAQREMGENIYNSLQEKGYEVLLDDRAERAGVKFADADLFGLPVRVTVGKKADEGIVEVKVRATGESEEVKVEELQTYIANILK.

This sequence belongs to the class-II aminoacyl-tRNA synthetase family. ProS type 1 subfamily. In terms of assembly, homodimer.

The protein localises to the cytoplasm. It carries out the reaction tRNA(Pro) + L-proline + ATP = L-prolyl-tRNA(Pro) + AMP + diphosphate. Its function is as follows. Catalyzes the attachment of proline to tRNA(Pro) in a two-step reaction: proline is first activated by ATP to form Pro-AMP and then transferred to the acceptor end of tRNA(Pro). As ProRS can inadvertently accommodate and process non-cognate amino acids such as alanine and cysteine, to avoid such errors it has two additional distinct editing activities against alanine. One activity is designated as 'pretransfer' editing and involves the tRNA(Pro)-independent hydrolysis of activated Ala-AMP. The other activity is designated 'posttransfer' editing and involves deacylation of mischarged Ala-tRNA(Pro). The misacylated Cys-tRNA(Pro) is not edited by ProRS. The protein is Proline--tRNA ligase of Bacillus cereus (strain G9842).